The sequence spans 438 residues: 3-phosphoshikimate 1-carboxyvinyltransferase (438 aa).

Lys21 lines the phosphoenolpyruvate pocket. The 3-phosphoshikimate site is built by Ser22 and Arg26. The phosphoenolpyruvate stretch occupies residues 93–96 (NSGT). Phosphoenolpyruvate-binding residues include Gly95, Thr96, and Arg123. Ser167, Ala168, Gln169, Asp315, and Lys342 together coordinate 3-phosphoshikimate. Gln169 lines the phosphoenolpyruvate pocket. The Proton acceptor role is filled by Asp315. Phosphoenolpyruvate-binding residues include Arg346 and Arg387.

It belongs to the EPSP synthase family. Homodimer or homotetramer.

The protein resides in the cytoplasm. The enzyme catalyses 3-phosphoshikimate + phosphoenolpyruvate = 5-O-(1-carboxyvinyl)-3-phosphoshikimate + phosphate. It participates in metabolic intermediate biosynthesis; chorismate biosynthesis; chorismate from D-erythrose 4-phosphate and phosphoenolpyruvate: step 6/7. Its function is as follows. Catalyzes the transfer of the enolpyruvyl moiety of phosphoenolpyruvate (PEP) to the 5-hydroxyl of shikimate-3-phosphate (S3P) to produce enolpyruvyl shikimate-3-phosphate and inorganic phosphate. This chain is 3-phosphoshikimate 1-carboxyvinyltransferase, found in Coxiella burnetii (strain RSA 493 / Nine Mile phase I).